A 158-amino-acid chain; its full sequence is Small ribosomal subunit protein uS7 (158 aa).

It belongs to the universal ribosomal protein uS7 family. As to quaternary structure, part of the 30S ribosomal subunit. Contacts proteins S9 and S11.

In terms of biological role, one of the primary rRNA binding proteins, it binds directly to 16S rRNA where it nucleates assembly of the head domain of the 30S subunit. Is located at the subunit interface close to the decoding center, probably blocks exit of the E-site tRNA. In Azobacteroides pseudotrichonymphae genomovar. CFP2, this protein is Small ribosomal subunit protein uS7.